The sequence spans 84 residues: Glutaredoxin (84 aa).

In terms of domain architecture, Glutaredoxin spans 1 to 84; it reads MPPVVIYTTA…AGKLDALLSA (84 aa). C12 and C15 form a disulfide bridge.

Belongs to the glutaredoxin family. As to quaternary structure, monomer.

The protein resides in the cytoplasm. Its function is as follows. Has a glutathione-disulfide oxidoreductase activity in the presence of NADPH and glutathione reductase. Reduces low molecular weight disulfides and proteins. The polypeptide is Glutaredoxin (grx) (Pseudomonas aeruginosa (strain ATCC 15692 / DSM 22644 / CIP 104116 / JCM 14847 / LMG 12228 / 1C / PRS 101 / PAO1)).